The primary structure comprises 225 residues: Urease accessory protein UreF (225 aa).

This sequence belongs to the UreF family. As to quaternary structure, ureD, UreF and UreG form a complex that acts as a GTP-hydrolysis-dependent molecular chaperone, activating the urease apoprotein by helping to assemble the nickel containing metallocenter of UreC. The UreE protein probably delivers the nickel.

The protein resides in the cytoplasm. Functionally, required for maturation of urease via the functional incorporation of the urease nickel metallocenter. This Picosynechococcus sp. (strain ATCC 27264 / PCC 7002 / PR-6) (Agmenellum quadruplicatum) protein is Urease accessory protein UreF.